The chain runs to 1072 residues: Isoleucine--tRNA ligase, cytoplasmic (1072 aa).

A 'HIGH' region motif is present at residues Pro47 to His57. Lys486 is covalently cross-linked (Glycyl lysine isopeptide (Lys-Gly) (interchain with G-Cter in ubiquitin)). The short motif at Lys602 to Ser606 is the 'KMSKS' region element. Lys605 is an ATP binding site. 2 positions are modified to phosphoserine: Ser829 and Ser1059.

This sequence belongs to the class-I aminoacyl-tRNA synthetase family.

The protein localises to the cytoplasm. It catalyses the reaction tRNA(Ile) + L-isoleucine + ATP = L-isoleucyl-tRNA(Ile) + AMP + diphosphate. This is Isoleucine--tRNA ligase, cytoplasmic (ILS1) from Saccharomyces cerevisiae (strain ATCC 204508 / S288c) (Baker's yeast).